The chain runs to 393 residues: S-adenosylmethionine synthase (393 aa).

E9 lines the Mg(2+) pocket. H15 contacts ATP. E43 provides a ligand contact to K(+). Positions 56 and 99 each coordinate L-methionine. ATP-binding positions include 167–169, 235–238, D246, 252–253, A269, K273, and K277; these read HGK, SGRF, and RK. D246 provides a ligand contact to L-methionine. L-methionine is bound at residue K277.

The protein belongs to the AdoMet synthase family. In terms of assembly, homotetramer. The cofactor is Mn(2+). Mg(2+) is required as a cofactor. Co(2+) serves as cofactor. Requires K(+) as cofactor. In terms of tissue distribution, root.

Its subcellular location is the cytoplasm. It carries out the reaction L-methionine + ATP + H2O = S-adenosyl-L-methionine + phosphate + diphosphate. Its pathway is amino-acid biosynthesis; S-adenosyl-L-methionine biosynthesis; S-adenosyl-L-methionine from L-methionine: step 1/1. Functionally, catalyzes the formation of S-adenosylmethionine from methionine and ATP. The reaction comprises two steps that are both catalyzed by the same enzyme: formation of S-adenosylmethionine (AdoMet) and triphosphate, and subsequent hydrolysis of the triphosphate. The chain is S-adenosylmethionine synthase (METK) from Pinus banksiana (Jack pine).